We begin with the raw amino-acid sequence, 159 residues long: Large ribosomal subunit protein uL22 (159 aa).

Belongs to the universal ribosomal protein uL22 family. Part of the 50S ribosomal subunit.

Functionally, this protein binds specifically to 23S rRNA; its binding is stimulated by other ribosomal proteins, e.g. L4, L17, and L20. It is important during the early stages of 50S assembly. It makes multiple contacts with different domains of the 23S rRNA in the assembled 50S subunit and ribosome. Its function is as follows. The globular domain of the protein is located near the polypeptide exit tunnel on the outside of the subunit, while an extended beta-hairpin is found that lines the wall of the exit tunnel in the center of the 70S ribosome. This Thermotoga sp. (strain RQ2) protein is Large ribosomal subunit protein uL22.